The following is a 144-amino-acid chain: Pleckstrin homology-like domain family A member 2 (144 aa).

One can recognise a PH domain in the interval 18 to 111; that stretch reads ILCEGELEKR…AAITMALIDF (94 aa). S140 carries the phosphoserine modification.

This sequence belongs to the PHLDA2 family. As to expression, specifically expressed at high levels in extraembryonic tissues in the developing conceptus (at protein level). Expressed in placenta and yolc sac. Expressed at low levels in fetal liver and kidney.

It localises to the cytoplasm. The protein resides in the membrane. Its function is as follows. Plays a role in regulating placenta growth. May act via its PH domain that competes with other PH domain-containing proteins, thereby preventing their binding to membrane lipids. The sequence is that of Pleckstrin homology-like domain family A member 2 (Phlda2) from Mus musculus (Mouse).